The primary structure comprises 663 residues: MNRKHLANAIRALSMDGVQQANSGHPGAPMGMADIAEVLWRSHLNHNPANPEWADRDRFILSNGHGSMLIYSLLHLSGYELSIDDLKNFRQLHSKTPGHPEYGYAPGVETTTGPLGQGITNAVGMAMAEKALAAQFNKEGHDIVDHFTYTFMGDGCLMEGISHEACSLAGTLGLGKLIAFWDDNGISIDGEVEGWFSDDTPKRFEAYGWHVIPAVDGHDSDAINAAIEAAKADPRPTLICTKTIIGFGSPNKQGTHDCHGAPLGADEIKAAKAQLGWEHGAFEIPQEVYAEWDAKETGAAKEASWNEKFAAYEAAYPELAAEFTRRVNGDLPKEWEEKASAIIADLQANPANIASRKASQNALEAFGAMLPEFMGGSADLAPSNLTMWSGSKSLEANDFSGNYIHYGVREFGMTAIMNGIALHGGFVPYGATFLMFMEYARNAMRMAALMKVQNIQVYTHDSIGLGEDGPTHQPVEQIASLRLTPNMSTWRPCDQVESAVAWKLAIERKDGPSALIFSRQNLAQQERDAKQLANIAKGGYILKDCEGQPELILIATGSEVELAIEAAAQLTAEGKAVRVVSMPSTDAFDKQDEAYREAVLPSAVTKRIAIEAGIADFWYKYVGFGGKIIGMTTFGESAPADELFKMFGFTTENVVNTAKELLA.

A substrate-binding site is contributed by H25. Residues H65 and 113–115 each bind thiamine diphosphate; that span reads GPL. D154 serves as a coordination point for Mg(2+). Thiamine diphosphate-binding residues include G155 and N184. Mg(2+) contacts are provided by N184 and I186. The substrate site is built by H259, R356, and S383. H259 serves as a coordination point for thiamine diphosphate. Residue E410 is the Proton donor of the active site. Residue F436 coordinates thiamine diphosphate. Substrate contacts are provided by H460, D468, and R519.

Belongs to the transketolase family. In terms of assembly, homodimer. Mg(2+) is required as a cofactor. It depends on Ca(2+) as a cofactor. Requires Mn(2+) as cofactor. Co(2+) serves as cofactor. The cofactor is thiamine diphosphate.

The catalysed reaction is D-sedoheptulose 7-phosphate + D-glyceraldehyde 3-phosphate = aldehydo-D-ribose 5-phosphate + D-xylulose 5-phosphate. Its function is as follows. Catalyzes the transfer of a two-carbon ketol group from a ketose donor to an aldose acceptor, via a covalent intermediate with the cofactor thiamine pyrophosphate. In Aliivibrio fischeri (strain ATCC 700601 / ES114) (Vibrio fischeri), this protein is Transketolase 2 (tkt2).